The primary structure comprises 339 residues: Alpha-N-dichloroacetyl-p-aminophenylserinol N-oxygenase (339 aa).

The segment covering 1–19 (MRDHTDEKSEAAGNDDGHV) has biased composition (basic and acidic residues). A disordered region spans residues 1 to 22 (MRDHTDEKSEAAGNDDGHVRIG). Fe cation-binding residues include Glu-109, Glu-144, His-147, Glu-205, His-232, Glu-236, and His-239.

The protein belongs to the AurF N-oxygenase family. Fe(2+) is required as a cofactor.

It carries out the reaction alpha-N-dichloroacetyl-p-aminophenylserinol + AH2 + 2 O2 = chloramphenicol + A + 2 H2O. It functions in the pathway antibiotic biosynthesis. Its function is as follows. Involved in chloramphenicol biosynthesis. Catalyzes the six-electron oxidation of an aryl-amine precursor of chloramphenicol (NH2-CAM) to yield the aryl-nitro group of chloramphenicol (CAM). During catalysis, upon exposure of the diferrous cluster to O(2), ClmI forms an exceptionally long-lived peroxo intermediate (CmlI-peroxo), which reacts with NH2-CAM to form CAM. The chain is Alpha-N-dichloroacetyl-p-aminophenylserinol N-oxygenase from Streptomyces venezuelae (strain ATCC 10712 / CBS 650.69 / DSM 40230 / JCM 4526 / NBRC 13096 / PD 04745).